A 107-amino-acid polypeptide reads, in one-letter code: Ig kappa chain V-VI region NQ6-8.3.1 (107 aa).

Positions 1 to 23 (QIVLTQSPAIMSASPGQKVTMTC) are framework-1. Cysteines 23 and 87 form a disulfide. Positions 24–33 (SASSSVSYMH) are complementarity-determining-1. The tract at residues 34 to 48 (WYQQKSGTSPKRWIY) is framework-2. Positions 49 to 55 (DTSKLAS) are complementarity-determining-2. The interval 56–87 (GXPARFSGSGSATSYSLTITSMQAEDAATYYC) is framework-3. The segment at 88-96 (QQWSSNPLT) is complementarity-determining-3. The framework-4 stretch occupies residues 97 to 106 (FGAGTKLELK).

In terms of biological role, anti-2-phenyl oxazolone (PHOX) Antibody. The chain is Ig kappa chain V-VI region NQ6-8.3.1 from Mus musculus (Mouse).